A 228-amino-acid polypeptide reads, in one-letter code: Potassium/proton antiporter CemA (228 aa).

Transmembrane regions (helical) follow at residues 6–26 (FIPL…SFSF), 113–133 (IICF…LFIL), and 188–208 (IISG…KYWI).

Belongs to the CemA family.

Its subcellular location is the plastid. It is found in the chloroplast inner membrane. The catalysed reaction is K(+)(in) + H(+)(out) = K(+)(out) + H(+)(in). Its function is as follows. Contributes to K(+)/H(+) antiport activity by supporting proton efflux to control proton extrusion and homeostasis in chloroplasts in a light-dependent manner to modulate photosynthesis. Prevents excessive induction of non-photochemical quenching (NPQ) under continuous-light conditions. Indirectly promotes efficient inorganic carbon uptake into chloroplasts. The sequence is that of Potassium/proton antiporter CemA from Populus alba (White poplar).